Here is a 508-residue protein sequence, read N- to C-terminus: Protein S-acyltransferase 18 (508 aa).

Helical transmembrane passes span 17–37 (IVGA…LGFF) and 42–62 (IAVI…IVLF). Residues 158–208 (SYCSLCDLEVKRSSKHCRTCNRCVEGFDHHCRWLNNCVGKKNYTTFILLMV) enclose the DHHC domain. Cys-188 acts as the S-palmitoyl cysteine intermediate in catalysis. Transmembrane regions (helical) follow at residues 203–223 (FILL…TALA) and 250–270 (WALA…SAAM). A disordered region spans residues 443–468 (VSPGRFSSPRRRFSGSSSSTVPSPKQ). A compositionally biased stretch (low complexity) spans 456–466 (SGSSSSTVPSP).

This sequence belongs to the DHHC palmitoyltransferase family.

It localises to the endoplasmic reticulum membrane. Its subcellular location is the cytoplasmic vesicle membrane. It catalyses the reaction L-cysteinyl-[protein] + hexadecanoyl-CoA = S-hexadecanoyl-L-cysteinyl-[protein] + CoA. Functionally, S-acyltransferase involved in protein lipid modification. This is Protein S-acyltransferase 18 (PAT18) from Arabidopsis thaliana (Mouse-ear cress).